Consider the following 722-residue polypeptide: Methionine--tRNA ligase (722 aa).

Residues 11-21 (PYANGPIHAGH) carry the 'HIGH' region motif. Residues C143, C146, C156, and C159 each coordinate Zn(2+). A 'KMSKS' region motif is present at residues 344-348 (KFSTS). ATP is bound at residue T347. The 101-residue stretch at 622–722 (DFAKLDLRVG…KEVKLGAKVR (101 aa)) folds into the tRNA-binding domain.

Belongs to the class-I aminoacyl-tRNA synthetase family. MetG type 1 subfamily. As to quaternary structure, homodimer. It depends on Zn(2+) as a cofactor.

The protein resides in the cytoplasm. The enzyme catalyses tRNA(Met) + L-methionine + ATP = L-methionyl-tRNA(Met) + AMP + diphosphate. In terms of biological role, is required not only for elongation of protein synthesis but also for the initiation of all mRNA translation through initiator tRNA(fMet) aminoacylation. This chain is Methionine--tRNA ligase, found in Pyrococcus abyssi (strain GE5 / Orsay).